Consider the following 385-residue polypeptide: Putative ribosomal RNA large subunit methyltransferase MJ1653 (385 aa).

Positions 2–81 (TTKLYVDFGG…LDENYIREKI (80 aa)) constitute a PUA domain.

It belongs to the methyltransferase superfamily. RlmI family.

The protein resides in the cytoplasm. This is Putative ribosomal RNA large subunit methyltransferase MJ1653 from Methanocaldococcus jannaschii (strain ATCC 43067 / DSM 2661 / JAL-1 / JCM 10045 / NBRC 100440) (Methanococcus jannaschii).